The sequence spans 539 residues: CTP synthase (539 aa).

An amidoligase domain region spans residues methionine 1–phenylalanine 268. Serine 14 contacts CTP. Serine 14 contacts UTP. Serine 15–leucine 20 contributes to the ATP binding site. Tyrosine 55 contacts L-glutamine. Aspartate 72 contacts ATP. Residues aspartate 72 and glutamate 142 each coordinate Mg(2+). Residues aspartate 149–glutamate 151, lysine 188–glutamine 193, and lysine 224 contribute to the CTP site. UTP is bound by residues lysine 188–glutamine 193 and lysine 224. Leucine 242 contacts ATP. Residues arginine 294–glutamate 532 form the Glutamine amidotransferase type-1 domain. Glycine 353 contributes to the L-glutamine binding site. The active-site Nucleophile; for glutamine hydrolysis is the cysteine 380. Residues leucine 381–glutamine 384, glutamate 404, and arginine 460 each bind L-glutamine. Active-site residues include histidine 505 and glutamate 507.

Belongs to the CTP synthase family. Homotetramer.

It carries out the reaction UTP + L-glutamine + ATP + H2O = CTP + L-glutamate + ADP + phosphate + 2 H(+). It catalyses the reaction L-glutamine + H2O = L-glutamate + NH4(+). The catalysed reaction is UTP + NH4(+) + ATP = CTP + ADP + phosphate + 2 H(+). Its pathway is pyrimidine metabolism; CTP biosynthesis via de novo pathway; CTP from UDP: step 2/2. Allosterically activated by GTP, when glutamine is the substrate; GTP has no effect on the reaction when ammonia is the substrate. The allosteric effector GTP functions by stabilizing the protein conformation that binds the tetrahedral intermediate(s) formed during glutamine hydrolysis. Inhibited by the product CTP, via allosteric rather than competitive inhibition. Its function is as follows. Catalyzes the ATP-dependent amination of UTP to CTP with either L-glutamine or ammonia as the source of nitrogen. May be involved in lipopolysaccharide biosynthesis, potentially channelling CTP directly to CMP-KDO synthetase. Regulates intracellular CTP levels through interactions with the four ribonucleotide triphosphates. This chain is CTP synthase, found in Chlamydia trachomatis serovar D (strain ATCC VR-885 / DSM 19411 / UW-3/Cx).